Reading from the N-terminus, the 420-residue chain is MLQVPGDVQILKEDNVTHSFCGLASVGWMYQKIRDSFFLILGTHTCAHFLQNALGMMIFAKPRFGIALIEEGDLSKNEPTLDEVIAEIKADHNPSVIFLLSSCTPEVMKVDFKGLADHLSTQQTPVLFVPASGLVYNFTQAEDSVLHALVPYCPVAPAGEKSVVFLGSVNDATADDLRAEAEELGIKVGGFLPESRFDRMPAIGPDTILAPIQPYLSRVAVKLERERGSRTLHSLFPFGPDGTRVFWEDLAREFGIEVDLRDREKAAWEKISRQTAMLKGKKVFLTADTMMELPLGRFLRSAGAEVVECSSAYINKKFLAKELKALEGVRVVEQPNFHRQLEDIKRLRPDLVVTSLMTANPFVGHGFIVKWSMEFMLMPIHGWSGVITLANLFVSPLDRRSKLPAFDKAVWLEGVMPAAE.

[4Fe-4S] cluster is bound by residues Cys21, Cys46, and Cys103.

This sequence belongs to the BchN/ChlN family. Protochlorophyllide reductase is composed of three subunits; BchL, BchN and BchB. Forms a heterotetramer of two BchB and two BchN subunits. [4Fe-4S] cluster is required as a cofactor.

It catalyses the reaction chlorophyllide a + oxidized 2[4Fe-4S]-[ferredoxin] + 2 ADP + 2 phosphate = protochlorophyllide a + reduced 2[4Fe-4S]-[ferredoxin] + 2 ATP + 2 H2O. The protein operates within porphyrin-containing compound metabolism; bacteriochlorophyll biosynthesis (light-independent). Functionally, component of the dark-operative protochlorophyllide reductase (DPOR) that uses Mg-ATP and reduced ferredoxin to reduce ring D of protochlorophyllide (Pchlide) to form chlorophyllide a (Chlide). This reaction is light-independent. The NB-protein (BchN-BchB) is the catalytic component of the complex. This is Light-independent protochlorophyllide reductase subunit N from Chlorobium luteolum (strain DSM 273 / BCRC 81028 / 2530) (Pelodictyon luteolum).